Reading from the N-terminus, the 82-residue chain is Small ribosomal subunit protein uS17 (82 aa).

This sequence belongs to the universal ribosomal protein uS17 family. In terms of assembly, part of the 30S ribosomal subunit.

In terms of biological role, one of the primary rRNA binding proteins, it binds specifically to the 5'-end of 16S ribosomal RNA. This chain is Small ribosomal subunit protein uS17, found in Rickettsia rickettsii (strain Iowa).